Reading from the N-terminus, the 314-residue chain is tRNA pseudouridine synthase B (314 aa).

Substrate is bound at residue His43. The active-site Nucleophile is the Asp48. 3 residues coordinate substrate: Tyr76, Tyr179, and Leu200.

The protein belongs to the pseudouridine synthase TruB family. Type 1 subfamily.

It catalyses the reaction uridine(55) in tRNA = pseudouridine(55) in tRNA. Functionally, responsible for synthesis of pseudouridine from uracil-55 in the psi GC loop of transfer RNAs. The protein is tRNA pseudouridine synthase B of Salmonella paratyphi A (strain ATCC 9150 / SARB42).